The following is a 353-amino-acid chain: Photosystem II protein D1 (353 aa).

Residue T2 is modified to N-acetylthreonine. At T2 the chain carries Phosphothreonine. 3 consecutive transmembrane segments (helical) span residues 29–46 (YIGWFGVLMIPTLLTATS), 118–133 (HFLLGVACYMGREWEL), and 142–156 (WIAVAYSAPVAAATA). Position 118 (H118) interacts with chlorophyll a. Y126 is a binding site for pheophytin a. The [CaMn4O5] cluster site is built by D170 and E189. The helical transmembrane segment at 197–218 (FHMLGVAGVFGGSLFSAMHGSL) threads the bilayer. H198 serves as a coordination point for chlorophyll a. Residues H215 and 264–265 (SF) contribute to the a quinone site. H215 serves as a coordination point for Fe cation. H272 lines the Fe cation pocket. Residues 274–288 (FLAAWPVVGIWFTAL) form a helical membrane-spanning segment. Residues H332, E333, D342, and A344 each contribute to the [CaMn4O5] cluster site. A propeptide spanning residues 345–353 (AVESPSING) is cleaved from the precursor.

It belongs to the reaction center PufL/M/PsbA/D family. In terms of assembly, PSII is composed of 1 copy each of membrane proteins PsbA, PsbB, PsbC, PsbD, PsbE, PsbF, PsbH, PsbI, PsbJ, PsbK, PsbL, PsbM, PsbT, PsbX, PsbY, PsbZ, Psb30/Ycf12, at least 3 peripheral proteins of the oxygen-evolving complex and a large number of cofactors. It forms dimeric complexes. Requires The D1/D2 heterodimer binds P680, chlorophylls that are the primary electron donor of PSII, and subsequent electron acceptors. It shares a non-heme iron and each subunit binds pheophytin, quinone, additional chlorophylls, carotenoids and lipids. D1 provides most of the ligands for the Mn4-Ca-O5 cluster of the oxygen-evolving complex (OEC). There is also a Cl(-1) ion associated with D1 and D2, which is required for oxygen evolution. The PSII complex binds additional chlorophylls, carotenoids and specific lipids. as cofactor. Tyr-161 forms a radical intermediate that is referred to as redox-active TyrZ, YZ or Y-Z. In terms of processing, C-terminally processed by CTPA; processing is essential to allow assembly of the oxygen-evolving complex and thus photosynthetic growth.

It localises to the plastid. The protein resides in the chloroplast thylakoid membrane. It catalyses the reaction 2 a plastoquinone + 4 hnu + 2 H2O = 2 a plastoquinol + O2. In terms of biological role, photosystem II (PSII) is a light-driven water:plastoquinone oxidoreductase that uses light energy to abstract electrons from H(2)O, generating O(2) and a proton gradient subsequently used for ATP formation. It consists of a core antenna complex that captures photons, and an electron transfer chain that converts photonic excitation into a charge separation. The D1/D2 (PsbA/PsbD) reaction center heterodimer binds P680, the primary electron donor of PSII as well as several subsequent electron acceptors. This chain is Photosystem II protein D1, found in Sinapis alba (White mustard).